The chain runs to 264 residues: MAVTINTLREYKQKGEAFSALTSYDATFAQVVSEAGVDVILIGDSLGMVLQGHDSTLPVTMDQMVYHTSCVARGNKGALIMADMPFMSYGTVADALDNAAELMRAGAHMVKLEGTDWMKDTIEALSERGVPVCAHLGLTPQFVNKFGGYKVQGRDEKAAEAMIEHACELEAAGADLILLECVPAPLAARITQAVKAPVIGIGAGSDTDGQVLVLHDMLGVTTGRKPRFVKNFLAETDSIPEAIAAYAQAVKARTFPAEEHTFKA.

Residues Asp-44 and Asp-83 each contribute to the Mg(2+) site. 3-methyl-2-oxobutanoate contacts are provided by residues 44–45, Asp-83, and Lys-111; that span reads DS. A Mg(2+)-binding site is contributed by Glu-113. The active-site Proton acceptor is the Glu-180.

The protein belongs to the PanB family. As to quaternary structure, homodecamer; pentamer of dimers. Mg(2+) is required as a cofactor.

It localises to the cytoplasm. It carries out the reaction 3-methyl-2-oxobutanoate + (6R)-5,10-methylene-5,6,7,8-tetrahydrofolate + H2O = 2-dehydropantoate + (6S)-5,6,7,8-tetrahydrofolate. It functions in the pathway cofactor biosynthesis; (R)-pantothenate biosynthesis; (R)-pantoate from 3-methyl-2-oxobutanoate: step 1/2. Catalyzes the reversible reaction in which hydroxymethyl group from 5,10-methylenetetrahydrofolate is transferred onto alpha-ketoisovalerate to form ketopantoate. The sequence is that of 3-methyl-2-oxobutanoate hydroxymethyltransferase from Marinobacter nauticus (strain ATCC 700491 / DSM 11845 / VT8) (Marinobacter aquaeolei).